The chain runs to 298 residues: Probable oxidoreductase (298 aa).

9 to 33 contacts NAD(+); the sequence is VVTGGASGLGAETVRALAAAGAEVT. A substrate-binding site is contributed by S139. Y165 functions as the Proton acceptor in the catalytic mechanism.

It belongs to the short-chain dehydrogenases/reductases (SDR) family.

The chain is Probable oxidoreductase from Streptomyces antibioticus.